The sequence spans 923 residues: Rap guanine nucleotide exchange factor 3 (923 aa).

Position 79 is a phosphoserine (S79). Positions 110–186 (ATCPNLIRDR…RDAQFYRFPG (77 aa)) constitute a DEP domain. The tract at residues 218 to 242 (TVALRKPPGQRTDEELDLIFEELLH) is interaction with PDE3B. Residues 311-314 (GQLA) and 321-322 (RA) contribute to the 3',5'-cyclic AMP site. The region spanning 384–518 (NRYTVMSGTP…EQWPERRRCH (135 aa)) is the N-terminal Ras-GEF domain. The interval 398-422 (ELLLEAMGPDSSAHDPTETFLSDFL) is interaction with PDE3B. 2 positions are modified to phosphoserine: S528 and S864. The Ras-GEF domain maps to 662–889 (SAKDLAGQLT…ARISTCSEQS (228 aa)).

As to quaternary structure, interacts with PDE3B and PIK3R6; form a signaling complex that regulates phosphatidylinositol 3-kinase gamma in angiogenesis. As to expression, widely expressed with highest levels in adult kidney, heart, thyroid and brain, and fetal kidney.

It is found in the endomembrane system. Functionally, guanine nucleotide exchange factor (GEF) for RAP1A and RAP2A small GTPases that is activated by binding cAMP. Through simultaneous binding of PDE3B to RAPGEF3 and PIK3R6 is assembled in a signaling complex in which it activates the PI3K gamma complex and which is involved in angiogenesis. Plays a role in the modulation of the cAMP-induced dynamic control of endothelial barrier function through a pathway that is independent on Rho-mediated signaling. Required for the actin rearrangement at cell-cell junctions, such as stress fibers and junctional actin. The protein is Rap guanine nucleotide exchange factor 3 (RAPGEF3) of Homo sapiens (Human).